Here is a 363-residue protein sequence, read N- to C-terminus: dTDP-L-rhamnose 4-epimerase (363 aa).

NAD(+) contacts are provided by residues 18 to 24 (GGAGFIG), 68 to 69 (DV), and 90 to 94 (LAAET). Ser-136 and Tyr-191 together coordinate substrate. Residues Tyr-191 and Lys-195 each contribute to the NAD(+) site. Tyr-191 serves as the catalytic Proton acceptor. Substrate contacts are provided by Asn-220 and Arg-259.

The protein belongs to the NAD(P)-dependent epimerase/dehydratase family. Requires NAD(+) as cofactor.

It carries out the reaction dTDP-6-deoxy-beta-L-talose = dTDP-beta-L-rhamnose. It functions in the pathway bacterial outer membrane biogenesis; LPS O-antigen biosynthesis. Functionally, catalyzes the interconvertion of dTDP-6-deoxy-L-talose and dTDP-L-rhamnose. The equilibrium is strongly toward dTDP-L-rhamnose. The sequence is that of dTDP-L-rhamnose 4-epimerase (wbiB) from Burkholderia thailandensis (strain ATCC 700388 / DSM 13276 / CCUG 48851 / CIP 106301 / E264).